The sequence spans 428 residues: Light-independent protochlorophyllide reductase subunit N (428 aa).

Residues cysteine 29, cysteine 54, and cysteine 115 each coordinate [4Fe-4S] cluster.

Belongs to the BchN/ChlN family. In terms of assembly, protochlorophyllide reductase is composed of three subunits; BchL, BchN and BchB. Forms a heterotetramer of two BchB and two BchN subunits. Requires [4Fe-4S] cluster as cofactor.

It catalyses the reaction chlorophyllide a + oxidized 2[4Fe-4S]-[ferredoxin] + 2 ADP + 2 phosphate = protochlorophyllide a + reduced 2[4Fe-4S]-[ferredoxin] + 2 ATP + 2 H2O. It participates in porphyrin-containing compound metabolism; bacteriochlorophyll biosynthesis (light-independent). Its function is as follows. Component of the dark-operative protochlorophyllide reductase (DPOR) that uses Mg-ATP and reduced ferredoxin to reduce ring D of protochlorophyllide (Pchlide) to form chlorophyllide a (Chlide). This reaction is light-independent. The NB-protein (BchN-BchB) is the catalytic component of the complex. The protein is Light-independent protochlorophyllide reductase subunit N of Roseobacter denitrificans (strain ATCC 33942 / OCh 114) (Erythrobacter sp. (strain OCh 114)).